The chain runs to 262 residues: Dihydroorotate dehydrogenase B (NAD(+)), electron transfer subunit (262 aa).

The 102-residue stretch at 3–104 folds into the FAD-binding FR-type domain; that stretch reads QLQEMMTVVS…MGPLGNGFPV (102 aa). Residues 53–56, 70–72, and 79–80 each bind FAD; these read RPIS, LYR, and GT. Residues Cys-226, Cys-231, Cys-234, and Cys-249 each coordinate [2Fe-2S] cluster.

The protein belongs to the PyrK family. As to quaternary structure, heterotetramer of 2 PyrK and 2 PyrD type B subunits. [2Fe-2S] cluster is required as a cofactor. The cofactor is FAD.

Its pathway is pyrimidine metabolism; UMP biosynthesis via de novo pathway; orotate from (S)-dihydroorotate (NAD(+) route): step 1/1. Functionally, responsible for channeling the electrons from the oxidation of dihydroorotate from the FMN redox center in the PyrD type B subunit to the ultimate electron acceptor NAD(+). The protein is Dihydroorotate dehydrogenase B (NAD(+)), electron transfer subunit of Lactococcus lactis subsp. cremoris (strain SK11).